The primary structure comprises 496 residues: Glutamyl-tRNA(Gln) amidotransferase subunit A (496 aa).

Residues K75 and S150 each act as charge relay system in the active site. Catalysis depends on S174, which acts as the Acyl-ester intermediate.

This sequence belongs to the amidase family. GatA subfamily. In terms of assembly, heterotrimer of A, B and C subunits.

It catalyses the reaction L-glutamyl-tRNA(Gln) + L-glutamine + ATP + H2O = L-glutaminyl-tRNA(Gln) + L-glutamate + ADP + phosphate + H(+). In terms of biological role, allows the formation of correctly charged Gln-tRNA(Gln) through the transamidation of misacylated Glu-tRNA(Gln) in organisms which lack glutaminyl-tRNA synthetase. The reaction takes place in the presence of glutamine and ATP through an activated gamma-phospho-Glu-tRNA(Gln). This Burkholderia cenocepacia (strain HI2424) protein is Glutamyl-tRNA(Gln) amidotransferase subunit A.